A 72-amino-acid polypeptide reads, in one-letter code: Translation initiation factor IF-1 (72 aa).

In terms of domain architecture, S1-like spans Met1–Arg72.

Belongs to the IF-1 family. As to quaternary structure, component of the 30S ribosomal translation pre-initiation complex which assembles on the 30S ribosome in the order IF-2 and IF-3, IF-1 and N-formylmethionyl-tRNA(fMet); mRNA recruitment can occur at any time during PIC assembly.

It is found in the cytoplasm. Functionally, one of the essential components for the initiation of protein synthesis. Stabilizes the binding of IF-2 and IF-3 on the 30S subunit to which N-formylmethionyl-tRNA(fMet) subsequently binds. Helps modulate mRNA selection, yielding the 30S pre-initiation complex (PIC). Upon addition of the 50S ribosomal subunit IF-1, IF-2 and IF-3 are released leaving the mature 70S translation initiation complex. The polypeptide is Translation initiation factor IF-1 (Aeromonas hydrophila subsp. hydrophila (strain ATCC 7966 / DSM 30187 / BCRC 13018 / CCUG 14551 / JCM 1027 / KCTC 2358 / NCIMB 9240 / NCTC 8049)).